We begin with the raw amino-acid sequence, 334 residues long: E3 ubiquitin-protein ligase CIP8 (334 aa).

Residues 111–158 (LNSRNEIDDDEDEDEDDGDEEEEDEEENLTVNDEEDEEDDLRRRNRFP) are disordered. Residues 117–149 (IDDDEDEDEDDGDEEEEDEEENLTVNDEEDEED) show a composition bias toward acidic residues. The RING-type; atypical zinc finger occupies 257–298 (CAVCKDGMVMGETGKKLPCGHCYHGDCIVPWLGTRNSCPVCR). The tract at residues 307–334 (EYEEERKKRTSTVSDSAAASSSSSTSRY) is disordered. Residues 317–334 (STVSDSAAASSSSSTSRY) are compositionally biased toward low complexity.

In terms of assembly, interacts with the RING finger of COP1. Interacts with UBC8 through its N-terminal region. Expressed in both light- and dark-grown seedlings.

It localises to the cytoplasm. It catalyses the reaction S-ubiquitinyl-[E2 ubiquitin-conjugating enzyme]-L-cysteine + [acceptor protein]-L-lysine = [E2 ubiquitin-conjugating enzyme]-L-cysteine + N(6)-ubiquitinyl-[acceptor protein]-L-lysine.. It participates in protein modification; protein ubiquitination. Functionally, E3 ubiquitin-protein ligase that mediates ubiquitination and subsequent proteasomal degradation of target proteins. Probably forms a minimal ubiquitin ligase complex in cooperation with the E2 enzyme UBC8. Its interaction with COP1 suggests that it may participate in proteasome-mediated degradation of HY5 in vivo. The chain is E3 ubiquitin-protein ligase CIP8 (CIP8) from Arabidopsis thaliana (Mouse-ear cress).